Here is a 92-residue protein sequence, read N- to C-terminus: Small ribosomal subunit protein bS20 (92 aa).

Residues 1–22 (MANSPQSKKRARQAEARAAVNK) form a disordered region.

It belongs to the bacterial ribosomal protein bS20 family.

Functionally, binds directly to 16S ribosomal RNA. The protein is Small ribosomal subunit protein bS20 of Cereibacter sphaeroides (strain ATCC 17029 / ATH 2.4.9) (Rhodobacter sphaeroides).